The primary structure comprises 85 residues: MVKLRLKRCGRKQRAAVYRIIAIDVRSRREGRDLRKVGFYDPIKNQTYLNVPAILYFLEKGAQPTGTVHDILKKAGVFTELHLNQ.

This sequence belongs to the bacterial ribosomal protein bS16 family.

The protein resides in the plastid. It localises to the chloroplast. The polypeptide is Small ribosomal subunit protein bS16c (Cucumis sativus (Cucumber)).